The following is a 214-amino-acid chain: Adenylate kinase (214 aa).

14–19 (GSGKGT) lines the ATP pocket. The tract at residues 32–61 (SVGKVLRTVMESNTAEADVVKKFIKSGKLV) is NMP. AMP contacts are provided by residues R38, 59 to 61 (KLV), 87 to 90 (GYPR), and Q94. The segment at 124–162 (GRISCTDCGTIYNKLYCMPKINGVCDICNSSSFQNRVDD) is LID. R125 serves as a coordination point for ATP. Zn(2+) contacts are provided by C128 and C131. 134 to 135 (IY) serves as a coordination point for ATP. The Zn(2+) site is built by C148 and C151. AMP-binding residues include R159 and R170. Q198 is an ATP binding site.

It belongs to the adenylate kinase family. Monomer.

The protein localises to the cytoplasm. The catalysed reaction is AMP + ATP = 2 ADP. It participates in purine metabolism; AMP biosynthesis via salvage pathway; AMP from ADP: step 1/1. Its function is as follows. Catalyzes the reversible transfer of the terminal phosphate group between ATP and AMP. Plays an important role in cellular energy homeostasis and in adenine nucleotide metabolism. The chain is Adenylate kinase from Orientia tsutsugamushi (strain Ikeda) (Rickettsia tsutsugamushi).